The sequence spans 437 residues: Carbonic anhydrase 9 (437 aa).

Residues 1-31 (MASLGPSPWAPLSTPAPTAQLLLFLLLQVSA) form the signal peptide. Residues 32 to 95 (QPQGLSGMQG…RMEESLGLED (64 aa)) form a proteoglycan-like (PG) region. Residues 32 to 390 (QPQGLSGMQG…HVNSCFTAGD (359 aa)) lie on the Extracellular side of the membrane. Positions 34 to 118 (QGLSGMQGEP…HGDEKGGGHS (85 aa)) are disordered. Acidic residues predominate over residues 50 to 79 (SGEDELGVDVLPSEEDAPEEADPPDGEDPP). Residues 96–390 (LSTPEAPEHS…HVNSCFTAGD (295 aa)) form a catalytic region. An O-linked (GlcNAc...) threonine glycan is attached at threonine 98. In terms of domain architecture, Alpha-carbonic anhydrase spans 118-369 (SHWSYGGTLL…LNGRTIEASF (252 aa)). Cysteine 135 and cysteine 315 are disulfide-bonded. Histidine 179 functions as the Proton donor/acceptor in the catalytic mechanism. Residues histidine 205, histidine 207, and histidine 230 each coordinate Zn(2+). Position 311-312 (311-312 (TT)) interacts with substrate. Asparagine 325 carries an N-linked (GlcNAc...) asparagine glycan. The helical transmembrane segment at 391–411 (ILALVFGLLFAVTSIAFLLQL) threads the bilayer. Over 412 to 437 (RRQHRHRSGTKDRVSYSPAEMTETGA) the chain is Cytoplasmic. Position 427 is a phosphotyrosine (tyrosine 427).

This sequence belongs to the alpha-carbonic anhydrase family. As to quaternary structure, forms oligomers linked by disulfide bonds. Zn(2+) serves as cofactor. Post-translationally, asn-325 bears high-mannose type glycan structures.

The protein localises to the nucleus. It localises to the nucleolus. The protein resides in the cell membrane. It is found in the cell projection. Its subcellular location is the microvillus membrane. The enzyme catalyses hydrogencarbonate + H(+) = CO2 + H2O. Its activity is regulated as follows. Inhibited by acetazolamide. Catalyzes the interconversion between carbon dioxide and water and the dissociated ions of carbonic acid (i.e. bicarbonate and hydrogen ions). This is Carbonic anhydrase 9 (Ca9) from Mus musculus (Mouse).